Here is a 598-residue protein sequence, read N- to C-terminus: Transcriptional repressor tup12 (598 aa).

The tract at residues 118 to 177 (IASGVVPQSSKTKHGRNSVSFGKYGNAGPFNSDNSSKPLILNNGSSGGTPKNLRSPAIDS) is disordered. WD repeat units lie at residues 285–325 (EPPI…AMVF), 332–371 (LITL…QQIR), 374–413 (DIAQ…RTVC), 415–454 (WDVE…KVIR), 456–495 (WTSS…NTIK), 510–549 (YKEG…RTIQ), and 552–585 (SPDS…ATGS).

It belongs to the WD repeat TUP1 family.

Functionally, transcriptional repressor. This chain is Transcriptional repressor tup12 (tup12), found in Schizosaccharomyces pombe (strain 972 / ATCC 24843) (Fission yeast).